Here is a 572-residue protein sequence, read N- to C-terminus: Urease subunit alpha (572 aa).

The 439-residue stretch at 134 to 572 (AGIDTHIHLI…AAMNQLYFFG (439 aa)) folds into the Urease domain. Positions 139, 141, and 222 each coordinate Ni(2+). Residue Lys222 is modified to N6-carboxylysine. Substrate is bound at residue His224. His251 and His277 together coordinate Ni(2+). The Proton donor role is filled by His325. Residue Asp365 participates in Ni(2+) binding.

It belongs to the metallo-dependent hydrolases superfamily. Urease alpha subunit family. Heterotrimer of UreA (gamma), UreB (beta) and UreC (alpha) subunits. Three heterotrimers associate to form the active enzyme. It depends on Ni cation as a cofactor. In terms of processing, carboxylation allows a single lysine to coordinate two nickel ions.

It localises to the cytoplasm. The catalysed reaction is urea + 2 H2O + H(+) = hydrogencarbonate + 2 NH4(+). It participates in nitrogen metabolism; urea degradation; CO(2) and NH(3) from urea (urease route): step 1/1. The protein is Urease subunit alpha of Edwardsiella ictaluri (strain 93-146).